The sequence spans 343 residues: MAKIDNAVLPEGSLVLVTGANGFVASHVVEQLLEHGYKVRGTARSASKLANLQKRWDAKYPGRFETAVVEDMLKQGAYDEVIKGAAGVAHIASVVSFSNKYDEVVTPAIGGTLNALRAAAATPSVKRFVLTSSTVSALIPKPNVEGIYLDEKSWNLESIDKAKTLPESDPQKSLWVYAASKTEAELAAWKFMDENKPHFTLNAVLPNYTIGTIFDPETQSGSTSGWMMSLFNGEVSPALALMPPQYYVSAVDIGLLHLGCLVLPQIERRRVYGTAGTFDWNTVLATFRKLYPSKTFPADFPDQGQDLSKFDTAPSLEILKSLGRPGWRSIEESIKDLVGSETA.

Tyrosine 177 provides a ligand contact to NADP(+).

Belongs to the NAD(P)-dependent epimerase/dehydratase family. Dihydroflavonol-4-reductase subfamily. As to quaternary structure, monomer.

It catalyses the reaction a primary alcohol + NADP(+) = an aldehyde + NADPH + H(+). With respect to regulation, inhibited by quercetin and diphenylhydantoin. Its function is as follows. Catalyzes the asymmetric reduction of o-substituted aliphatic and aromatic aldehydes and ketones to an S-enantiomer. Reduces ethyl 4-chloro-3-oxobutanoate to ethyl (S)-4-chloro-3-hydroxybutanoate. This Sporidiobolus salmonicolor (Yeast-like fungus) protein is Aldehyde reductase 2.